Here is a 90-residue protein sequence, read N- to C-terminus: Iron oxidase (90 aa).

Positions M1–A37 form a signal peptide, tat-type signal. Positions 57, 60, 69, and 82 each coordinate [4Fe-4S] cluster.

The protein belongs to the high-potential iron-sulfur protein (HiPIP) family. In terms of assembly, homomultimer. In terms of processing, predicted to be exported by the Tat system. The position of the signal peptide cleavage has been experimentally proven.

It is found in the periplasm. Functionally, catalyzes the oxidation of Fe(2+) to Fe(3+) coupled to cytochrome c552 reduction. This chain is Iron oxidase (iro), found in Acidithiobacillus ferrooxidans (Thiobacillus ferrooxidans).